Reading from the N-terminus, the 438-residue chain is Xylose isomerase (438 aa).

Catalysis depends on residues His-100 and Asp-103. Glu-231, Glu-267, His-270, Asp-295, Asp-306, Asp-308, and Asp-338 together coordinate Mg(2+).

This sequence belongs to the xylose isomerase family. In terms of assembly, homotetramer. Requires Mg(2+) as cofactor.

Its subcellular location is the cytoplasm. The enzyme catalyses alpha-D-xylose = alpha-D-xylulofuranose. The protein is Xylose isomerase (xylA) of Thermoanaerobacter pseudethanolicus (strain ATCC 33223 / 39E) (Clostridium thermohydrosulfuricum).